Here is a 264-residue protein sequence, read N- to C-terminus: tRNA pseudouridine synthase A (264 aa).

The Nucleophile role is filled by aspartate 56. A substrate-binding site is contributed by tyrosine 114.

The protein belongs to the tRNA pseudouridine synthase TruA family. Homodimer.

It carries out the reaction uridine(38/39/40) in tRNA = pseudouridine(38/39/40) in tRNA. Functionally, formation of pseudouridine at positions 38, 39 and 40 in the anticodon stem and loop of transfer RNAs. This is tRNA pseudouridine synthase A from Buchnera aphidicola subsp. Baizongia pistaciae (strain Bp).